The chain runs to 375 residues: tRNA (guanine(26)-N(2))-dimethyltransferase (375 aa).

Positions 2–368 constitute a Trm1 methyltransferase domain; that stretch reads KYITEGNTKL…AKLIDIVEFI (367 aa). 5 residues coordinate S-adenosyl-L-methionine: R35, R66, D89, D116, and A117.

The protein belongs to the class I-like SAM-binding methyltransferase superfamily. Trm1 family.

The catalysed reaction is guanosine(26) in tRNA + 2 S-adenosyl-L-methionine = N(2)-dimethylguanosine(26) in tRNA + 2 S-adenosyl-L-homocysteine + 2 H(+). Functionally, dimethylates a single guanine residue at position 26 of a number of tRNAs using S-adenosyl-L-methionine as donor of the methyl groups. In Methanococcus aeolicus (strain ATCC BAA-1280 / DSM 17508 / OCM 812 / Nankai-3), this protein is tRNA (guanine(26)-N(2))-dimethyltransferase.